Reading from the N-terminus, the 685-residue chain is MNKGWLELESDPGLFTLLVEDFGVKGVQVEEIYDLQSKCPGPVYGFIFLFKWIEERRSRRKVSTLLDDTSVMEDEVVNNMFFAHQLIPNSCATHALLSVLLNCSGVHLGPTLSRIKEFTKGFSPESKGYAIGNAPELAKAHNSHARPEPRHLPEKQNGISAVRTMEAFHFVSYVPIKGRLFELDGLKVYPIDHGPWAEDEEWTDKARRVIMERIGLATAGEPYHDIRFNLMAVVPDRRLKYESKLHILKMNRQTVLEALQQLIRVTQPELIQAQKPTEGQSTEETKSAALKAPVSQESHRAHHGSHRNATDVGAEPPGALIRGPVMSAYSKPNSLAQNGGTVAAPASRLPAFLDNHNYAKSPMQEEEDLAAGVGRSRGVPPPAPDTDEEEEEETENVRRPLTPPGFKRRSSEPLPPPPGPEPGVLAEKLKETQRDLCSPLSIKTGAPTAPHSQPSPTPSNESTDTASEIGSAFNSPLRSPLRSANPTRPSSPVTLHLSKVLFGEEEPLLRLDCVRYNRAVRELGPHISTGILHLSKDGYLCPLSRLETGKVSPKGNKVEEPRESSEPDTERSRVTEVPQGEKFSPKELLALLKCVEAEISSSEACLREELEKRKKFKIDDQRRTHNYDEFICAFISMLAQEGMLASLVEQNISVRRRQGVSIGRLHKQRKPDRRKRSRPYKAKRQ.

The UCH catalytic domain occupies 4–235 (GWLELESDPG…IRFNLMAVVP (232 aa)). The Nucleophile role is filled by C91. H169 functions as the Proton donor in the catalytic mechanism. Disordered stretches follow at residues 273-325 (AQKP…RGPV), 363-425 (MQEE…PGVL), 440-493 (LSIK…SSPV), and 550-579 (KVSP…EVPQ). Acidic residues predominate over residues 385–394 (DTDEEEEEET). A compositionally biased stretch (polar residues) spans 450–493 (PHSQPSPTPSNESTDTASEIGSAFNSPLRSPLRSANPTRPSSPV). Positions 556–574 (NKVEEPRESSEPDTERSRV) are enriched in basic and acidic residues. The ULD domain maps to 626 to 654 (NYDEFICAFISMLAQEGMLASLVEQNISV). Residues 659-685 (GVSIGRLHKQRKPDRRKRSRPYKAKRQ) form a disordered region. Residues 673 to 678 (RRKRSR) carry the Nuclear localization signal motif.

This sequence belongs to the peptidase C12 family. BAP1 subfamily. Component of the PR-DUB complex.

It is found in the cytoplasm. Its subcellular location is the nucleus. The enzyme catalyses Thiol-dependent hydrolysis of ester, thioester, amide, peptide and isopeptide bonds formed by the C-terminal Gly of ubiquitin (a 76-residue protein attached to proteins as an intracellular targeting signal).. Its function is as follows. Deubiquitinating enzyme that plays a key role in chromatin by mediating deubiquitination of histone H2A. Catalytic component of the PR-DUB complex, a complex that specifically mediates deubiquitination of histone H2A monoubiquitinated at 'Lys-119' (H2AK119ub1). This is Ubiquitin carboxyl-terminal hydrolase BAP1 (bap1) from Xenopus tropicalis (Western clawed frog).